The following is a 247-amino-acid chain: Probable transcriptional regulatory protein YebC (247 aa).

A disordered region spans residues 1 to 20 (MAGHSKWANTRHRKAAQDAK).

The protein belongs to the TACO1 family.

The protein resides in the cytoplasm. The protein is Probable transcriptional regulatory protein YebC of Salmonella arizonae (strain ATCC BAA-731 / CDC346-86 / RSK2980).